Here is a 344-residue protein sequence, read N- to C-terminus: WW domain binding protein 1-like (344 aa).

The helical transmembrane segment at 42-62 threads the bilayer; that stretch reads LWWFWLVWTIIIILSCCCVCH. Disordered regions lie at residues 132–250 and 302–321; these read LLPP…RFTG and CLSS…PRPP. The span at 145-173 shows a compositional bias: low complexity; that stretch reads PGADQPQGSQGAQSSPLSGPSRSSTRPPS. S173 carries the phosphoserine modification. A compositionally biased stretch (basic and acidic residues) spans 212-228; that stretch reads LDRDSECKEELLKDSSS.

The protein resides in the membrane. The sequence is that of WW domain binding protein 1-like (Wbp1l) from Rattus norvegicus (Rat).